Reading from the N-terminus, the 461-residue chain is Coagulation factor IX (461 aa).

Positions 1–28 are cleaved as a signal peptide; sequence MQRVNMIMAESPGLITICLLGYLLSAEC. Residues 29–46 constitute a propeptide that is removed on maturation; it reads TVFLDHENANKILNRPKR. Ca(2+) is bound by residues Tyr-47, Asn-48, Glu-53, Glu-54, Glu-61, Glu-63, Glu-66, Glu-67, Glu-72, Glu-73, and Glu-76. The Gla domain occupies 47–92; the sequence is YNSGKLEEFVQGNLERECMEEKCSFEEAREVFENTERTTEFWKQYV. 4-carboxyglutamate is present on residues Glu-53, Glu-54, Glu-61, Glu-63, Glu-66, Glu-67, Glu-72, Glu-73, Glu-76, Glu-79, and Glu-82. Residue Glu-61 participates in Mg(2+) binding. Cys-64 and Cys-69 are oxidised to a cystine. Glu-66 lines the Mg(2+) pocket. Mg(2+) is bound at residue Glu-72. Position 76 (Glu-76) interacts with Mg(2+). A Ca(2+)-binding site is contributed by Glu-82. Residue Glu-82 participates in Mg(2+) binding. Thr-85 is a glycosylation site (O-linked (GalNAc...) threonine). Glu-86, Asp-93, Gly-94, and Gln-96 together coordinate Ca(2+). A 4-carboxyglutamate modification is found at Glu-86. A Mg(2+)-binding site is contributed by Glu-86. Positions 93 to 129 constitute an EGF-like 1; calcium-binding domain; it reads DGDQCESNPCLNGGSCKDDINSYECWCPFGFEGKNCE. 10 cysteine pairs are disulfide-bonded: Cys-97–Cys-108, Cys-102–Cys-117, Cys-119–Cys-128, Cys-134–Cys-145, Cys-141–Cys-155, Cys-157–Cys-170, Cys-178–Cys-335, Cys-252–Cys-268, Cys-382–Cys-396, and Cys-407–Cys-435. O-linked (Glc...) serine glycosylation occurs at Ser-99. Residue Ser-107 is glycosylated (O-linked (Fuc...) serine). Ca(2+)-binding residues include Asp-110 and Asp-111. Asp-110 bears the (3R)-3-hydroxyaspartate mark. Ser-114 is modified (phosphoserine). Residues 130–171 form the EGF-like 2 domain; that stretch reads LDVTCNIKNGRCEQFCKNSADNKVVCSCTEGYRLAENQKSCE. A propeptide spans 192–226 (activation peptide); the sequence is AETVFPDVDYVNSTEAETILDNITQSTQSFNDFTR. Tyr-201 carries the sulfotyrosine modification. Residue Asn-203 is glycosylated (N-linked (GlcNAc...) asparagine). Phosphoserine is present on Ser-204. Thr-205 carries the post-translational modification Phosphothreonine; alternate. Thr-205 is a glycosylation site (O-linked (GalNAc...) threonine; alternate). The N-linked (GlcNAc...) asparagine glycan is linked to Asn-213. O-linked (GalNAc...) threonine glycosylation is found at Thr-215 and Thr-225. In terms of domain architecture, Peptidase S1 spans 227–459; the sequence is VVGGEDAKPG…YVNWIKEKTK (233 aa). The active-site Charge relay system is the His-267. Ca(2+) is bound by residues Glu-281, Asn-283, Glu-286, Glu-288, and Glu-291. Catalysis depends on Asp-315, which acts as the Charge relay system. Ser-411 acts as the Charge relay system in catalysis.

This sequence belongs to the peptidase S1 family. Heterodimer of a light chain and a heavy chain; disulfide-linked. Interacts (inactive and activated) with F11 (activated) in calcium-dependent manner. Interacts with SERPINC1. Interacts (activated) with iripin-8, a serine protease inhibitor from Ixodes ricinus saliva. Interacts (inactive and activated) with nitrophorin-2, an anticoagulant protein from Rhodnius prolixus. Activated by factor XIa, which excises the activation peptide. The propeptide can also be removed by snake venom protease. Activated by coagulation factor VIIa-tissue factor (F7-F3) complex in calcium-dependent manner. Post-translationally, the iron and 2-oxoglutarate dependent 3-hydroxylation of aspartate and asparagine is (R) stereospecific within EGF domains. In terms of tissue distribution, detected in blood plasma (at protein level). Synthesized primarily in the liver and secreted in plasma.

It is found in the secreted. The catalysed reaction is Selective cleavage of Arg-|-Ile bond in factor X to form factor Xa.. Its function is as follows. Factor IX is a vitamin K-dependent plasma protein that participates in the intrinsic pathway of blood coagulation by converting factor X to its active form in the presence of Ca(2+) ions, phospholipids, and factor VIIIa. This is Coagulation factor IX (F9) from Homo sapiens (Human).